A 400-amino-acid polypeptide reads, in one-letter code: Tektin-B1 (400 aa).

Coiled-coil stretches lie at residues 35–81 (TRLS…AKAL), 236–294 (FALR…LENR), and 310–353 (GLVN…LELK).

This sequence belongs to the tektin family. May form a heterodimer with tektin a or exist as a homodimer. In terms of tissue distribution, cilia and flagella.

The protein resides in the cytoplasm. Its subcellular location is the cytoskeleton. Its function is as follows. Structural component of ciliary and flagellar microtubules. This chain is Tektin-B1, found in Strongylocentrotus purpuratus (Purple sea urchin).